The sequence spans 73 residues: Translation initiation factor IF-1 3 (73 aa).

In terms of domain architecture, S1-like spans 1–72 (MAKEELVEFG…TKGRINYRHK (72 aa)).

Belongs to the IF-1 family. In terms of assembly, component of the 30S ribosomal translation pre-initiation complex which assembles on the 30S ribosome in the order IF-2 and IF-3, IF-1 and N-formylmethionyl-tRNA(fMet); mRNA recruitment can occur at any time during PIC assembly.

The protein localises to the cytoplasm. In terms of biological role, one of the essential components for the initiation of protein synthesis. Stabilizes the binding of IF-2 and IF-3 on the 30S subunit to which N-formylmethionyl-tRNA(fMet) subsequently binds. Helps modulate mRNA selection, yielding the 30S pre-initiation complex (PIC). Upon addition of the 50S ribosomal subunit IF-1, IF-2 and IF-3 are released leaving the mature 70S translation initiation complex. This Cupriavidus metallidurans (strain ATCC 43123 / DSM 2839 / NBRC 102507 / CH34) (Ralstonia metallidurans) protein is Translation initiation factor IF-1 3.